We begin with the raw amino-acid sequence, 550 residues long: Urocanate hydratase (550 aa).

Residues 48 to 49 (GG), glutamine 126, 172 to 174 (GMG), glutamate 192, arginine 197, 238 to 239 (NA), 259 to 263 (QTSAH), 268 to 269 (YL), and tyrosine 317 contribute to the NAD(+) site. Cysteine 405 is an active-site residue. An NAD(+)-binding site is contributed by glycine 487.

Belongs to the urocanase family. Requires NAD(+) as cofactor.

The protein resides in the cytoplasm. The enzyme catalyses 4-imidazolone-5-propanoate = trans-urocanate + H2O. The protein operates within amino-acid degradation; L-histidine degradation into L-glutamate; N-formimidoyl-L-glutamate from L-histidine: step 2/3. Catalyzes the conversion of urocanate to 4-imidazolone-5-propionate. In Saccharopolyspora erythraea (strain ATCC 11635 / DSM 40517 / JCM 4748 / NBRC 13426 / NCIMB 8594 / NRRL 2338), this protein is Urocanate hydratase.